A 394-amino-acid polypeptide reads, in one-letter code: Elongation factor Tu (394 aa).

Positions 10–204 (KPHINVGTIG…SLDKYIPIPV (195 aa)) constitute a tr-type G domain. A G1 region spans residues 19 to 26 (GHVDHGKT). GTP is bound at residue 19–26 (GHVDHGKT). Mg(2+) is bound at residue Thr26. The segment at 60-64 (GITIN) is G2. Residues 81–84 (DCPG) are G3. GTP is bound by residues 81 to 85 (DCPGH) and 136 to 139 (NKCD). The segment at 136–139 (NKCD) is G4. A G5 region spans residues 174–176 (SAL).

The protein belongs to the TRAFAC class translation factor GTPase superfamily. Classic translation factor GTPase family. EF-Tu/EF-1A subfamily. As to quaternary structure, monomer.

Its subcellular location is the cytoplasm. The catalysed reaction is GTP + H2O = GDP + phosphate + H(+). Its function is as follows. GTP hydrolase that promotes the GTP-dependent binding of aminoacyl-tRNA to the A-site of ribosomes during protein biosynthesis. The polypeptide is Elongation factor Tu (Buchnera aphidicola subsp. Cinara cedri (strain Cc)).